We begin with the raw amino-acid sequence, 438 residues long: Probable chaperone protein ClpB 1 (438 aa).

Positions 1–94 form a coiled coil; sequence MNTADTRQRL…NNRKIEARQA (94 aa). Residues 1–118 are linker; the sequence is MNTADTRQRL…IADIVSRWTG (118 aa). Positions 128 to 345 are NBD2; sequence ERQKLLGIES…RIDEVILFTP (218 aa). 178 to 185 lines the ATP pocket; sequence GPTGVGKT. Positions 346 to 438 are C-terminal; that stretch reads LTRENLREIV…ENDAIVMKKK (93 aa).

It belongs to the ClpA/ClpB family. As to quaternary structure, homohexamer. The oligomerization is ATP-dependent.

The protein resides in the cytoplasm. Functionally, part of a stress-induced multi-chaperone system, it is involved in the recovery of the cell from heat-induced damage, in cooperation with DnaK, DnaJ and GrpE. Acts before DnaK, in the processing of protein aggregates. Protein binding stimulates the ATPase activity; ATP hydrolysis unfolds the denatured protein aggregates, which probably helps expose new hydrophobic binding sites on the surface of ClpB-bound aggregates, contributing to the solubilization and refolding of denatured protein aggregates by DnaK. The polypeptide is Probable chaperone protein ClpB 1 (clpB1) (Chlorobaculum tepidum (strain ATCC 49652 / DSM 12025 / NBRC 103806 / TLS) (Chlorobium tepidum)).